A 512-amino-acid polypeptide reads, in one-letter code: Putative ribose/galactose/methyl galactoside import ATP-binding protein 2 (512 aa).

ABC transporter domains are found at residues 14 to 251 (IALT…VGRQ) and 262 to 507 (TSGN…TQRE). An ATP-binding site is contributed by 46-53 (GENGAGKS).

This sequence belongs to the ABC transporter superfamily. Carbohydrate importer 2 (CUT2) (TC 3.A.1.2) family.

It is found in the cell inner membrane. The enzyme catalyses D-ribose(out) + ATP + H2O = D-ribose(in) + ADP + phosphate + H(+). It carries out the reaction D-galactose(out) + ATP + H2O = D-galactose(in) + ADP + phosphate + H(+). In terms of biological role, part of an ABC transporter complex involved in carbohydrate import. Could be involved in ribose, galactose and/or methyl galactoside import. Responsible for energy coupling to the transport system. This chain is Putative ribose/galactose/methyl galactoside import ATP-binding protein 2, found in Burkholderia cenocepacia (strain HI2424).